The primary structure comprises 396 residues: NADH-quinone oxidoreductase subunit D (396 aa).

This sequence belongs to the complex I 49 kDa subunit family. In terms of assembly, NDH-1 is composed of 14 different subunits. Subunits NuoB, C, D, E, F, and G constitute the peripheral sector of the complex.

It localises to the cell inner membrane. It carries out the reaction a quinone + NADH + 5 H(+)(in) = a quinol + NAD(+) + 4 H(+)(out). NDH-1 shuttles electrons from NADH, via FMN and iron-sulfur (Fe-S) centers, to quinones in the respiratory chain. The immediate electron acceptor for the enzyme in this species is believed to be ubiquinone. Couples the redox reaction to proton translocation (for every two electrons transferred, four hydrogen ions are translocated across the cytoplasmic membrane), and thus conserves the redox energy in a proton gradient. This is NADH-quinone oxidoreductase subunit D from Brucella anthropi (strain ATCC 49188 / DSM 6882 / CCUG 24695 / JCM 21032 / LMG 3331 / NBRC 15819 / NCTC 12168 / Alc 37) (Ochrobactrum anthropi).